Here is a 115-residue protein sequence, read N- to C-terminus: Large ribosomal subunit protein bL20 (115 aa).

This sequence belongs to the bacterial ribosomal protein bL20 family.

Functionally, binds directly to 23S ribosomal RNA and is necessary for the in vitro assembly process of the 50S ribosomal subunit. It is not involved in the protein synthesizing functions of that subunit. This is Large ribosomal subunit protein bL20 (rplT) from Borreliella burgdorferi (strain ATCC 35210 / DSM 4680 / CIP 102532 / B31) (Borrelia burgdorferi).